Consider the following 367-residue polypeptide: Probable dual-specificity RNA methyltransferase RlmN (367 aa).

The Proton acceptor role is filled by glutamate 92. A Radical SAM core domain is found at 98 to 326; it reads QEYGLSVCVT…YDTLKKNGIN (229 aa). Cysteine 105 and cysteine 341 are joined by a disulfide. [4Fe-4S] cluster-binding residues include cysteine 112, cysteine 116, and cysteine 119. S-adenosyl-L-methionine contacts are provided by residues 164–165, serine 196, 219–221, and asparagine 297; these read GE and SLH. The active-site S-methylcysteine intermediate is cysteine 341.

It belongs to the radical SAM superfamily. RlmN family. [4Fe-4S] cluster serves as cofactor.

Its subcellular location is the cytoplasm. It carries out the reaction adenosine(2503) in 23S rRNA + 2 reduced [2Fe-2S]-[ferredoxin] + 2 S-adenosyl-L-methionine = 2-methyladenosine(2503) in 23S rRNA + 5'-deoxyadenosine + L-methionine + 2 oxidized [2Fe-2S]-[ferredoxin] + S-adenosyl-L-homocysteine. It catalyses the reaction adenosine(37) in tRNA + 2 reduced [2Fe-2S]-[ferredoxin] + 2 S-adenosyl-L-methionine = 2-methyladenosine(37) in tRNA + 5'-deoxyadenosine + L-methionine + 2 oxidized [2Fe-2S]-[ferredoxin] + S-adenosyl-L-homocysteine. Functionally, specifically methylates position 2 of adenine 2503 in 23S rRNA and position 2 of adenine 37 in tRNAs. This chain is Probable dual-specificity RNA methyltransferase RlmN, found in Listeria monocytogenes serovar 1/2a (strain ATCC BAA-679 / EGD-e).